The sequence spans 219 residues: MRRHPSHSPYRGGCEVRPKRRGLMLAHSSSESPPESLPDAWTVLKTRTAVRNYAKEPVDDALIEQLLEAMLAAPTASNRQAWSFMVVRRPAAVRRLRAFSPGVLGTPAFFVVACVDRSLTDNLSPKLSQKIYDTSKLCVAMAVENLLLAAHAAGLGGCPVGSFRSDIVTSMLGIPEHIEPMLVVPIGRPATALVPSQRRAKNEVVNYESWGNRAAAPTA.

This sequence belongs to the nitroreductase family. In terms of assembly, homomer. It depends on FMN as a cofactor. In terms of processing, the N-terminus is blocked.

Its subcellular location is the cytoplasm. It catalyses the reaction cyclo(L-phenylalanyl-L-leucyl) + 2 O2 = albonoursin + 2 H2O2. In terms of biological role, involved in the biosynthesis of albonoursin (cyclo[(alpha,beta-dehydro-Phe)-(alpha,beta-dehydro-Leu)]), an antibacterial peptide. Catalyzes the formation of alpha,beta-dehydro-Phe (DPhe) and alpha,beta-dehydro-Leu (DLeu) residues during the biosynthesis of albonoursin. The catalytic reaction of cyclo(L-Phe-L-Leu) occurs in a two-step sequential alpha-beta-dehydrogenation leading first to cyclo(alpha,beta-dehydro-Phe-L-Leu) and finally to albonoursin. Can also use cyclo(L-Phe-L-His), cyclo(L-Trp-L-Trp), cyclo(L-Leu-L-Ala), cyclo(L-Phe-Gly), cyclo(L-Leu-Gly), cyclo(L-Ser-Gly) and cyclo(L-Glu-Gly) as substrate suggesting that the diketopiperazine ring is essential for the enzymatic reaction. In Streptomyces noursei (Streptomyces albulus), this protein is Albonoursin synthase (albA).